The chain runs to 252 residues: Eukaryotic translation initiation factor 3 subunit K (252 aa).

One can recognise a PCI domain in the interval 46-225 (FDCYANLALL…VKVPTNKENE (180 aa)).

The protein belongs to the eIF-3 subunit K family. As to quaternary structure, component of the eukaryotic translation initiation factor 3 (eIF-3) complex.

It is found in the cytoplasm. In terms of biological role, component of the eukaryotic translation initiation factor 3 (eIF-3) complex, which is involved in protein synthesis of a specialized repertoire of mRNAs and, together with other initiation factors, stimulates binding of mRNA and methionyl-tRNAi to the 40S ribosome. The eIF-3 complex specifically targets and initiates translation of a subset of mRNAs involved in cell proliferation. The chain is Eukaryotic translation initiation factor 3 subunit K from Aspergillus terreus (strain NIH 2624 / FGSC A1156).